Consider the following 215-residue polypeptide: Vesicle-trafficking protein SEC22b (215 aa).

At Met-1–Ala-194 the chain is on the cytoplasmic side. A Longin domain is found at Met-6–Ile-119. Lys-38 bears the N6-acetyllysine mark. A v-SNARE coiled-coil homology domain is found at Asn-134–Ala-194. Phosphoserine is present on Ser-137. The residue at position 140 (Thr-140) is a Phosphothreonine. Phosphoserine occurs at positions 164, 168, 174, and 177. A helical; Anchor for type IV membrane protein transmembrane segment spans residues Lys-195–Leu-215.

This sequence belongs to the synaptobrevin family. Interacts with STX17. Component of two distinct SNARE complexes consisting of STX5, GOSR2/BOS1, BET1 and SEC22B or STX18, USE1L, BNIP1/SEC20L and SEC22B. YKT6 can probably replace SEC22B as subunit of either complex. Interacts with the COPII Sec23/24 complex composed of SEC23A and SEC24A; recruits SEC22B into COPII-coated vesicles to allow its transport from the endoplasmic reticulum to the Golgi. Interacts with BET1.

Its subcellular location is the endoplasmic reticulum membrane. The protein localises to the endoplasmic reticulum-Golgi intermediate compartment membrane. The protein resides in the golgi apparatus. It is found in the cis-Golgi network membrane. It localises to the trans-Golgi network membrane. Its subcellular location is the melanosome. In terms of biological role, SNARE involved in targeting and fusion of ER-derived transport vesicles with the Golgi complex as well as Golgi-derived retrograde transport vesicles with the ER. This Cricetulus griseus (Chinese hamster) protein is Vesicle-trafficking protein SEC22b (Sec22b).